Reading from the N-terminus, the 442-residue chain is ATP-dependent RNA helicase SUB2 (442 aa).

A Q motif motif is present at residues 59-87; that stretch reads TGFRDFLLKPELLRAISDLGFEHPSEVQQ. In terms of domain architecture, Helicase ATP-binding spans 90–265; the sequence is IPQAILGTDV…KKFMQSPLEI (176 aa). Residue 103–110 participates in ATP binding; the sequence is AKSGMGKT. Residues 212-215 carry the DECD box motif; the sequence is DECD. One can recognise a Helicase C-terminal domain in the interval 277–438; that stretch reads GLQQFYLKLE…TLPETVDPAT (162 aa).

It belongs to the DEAD box helicase family. DECD subfamily.

The protein resides in the nucleus. It carries out the reaction ATP + H2O = ADP + phosphate + H(+). In terms of biological role, ATP-binding RNA helicase involved in transcription elongation and required for the export of mRNA out of the nucleus. SUB2 also plays a role in pre-mRNA splicing and spliceosome assembly. May be involved in rDNA and telomeric silencing, and maintenance of genome integrity. This is ATP-dependent RNA helicase SUB2 (SUB2) from Cryptococcus neoformans var. neoformans serotype D (strain JEC21 / ATCC MYA-565) (Filobasidiella neoformans).